We begin with the raw amino-acid sequence, 90 residues long: Guanine nucleotide-binding protein subunit gamma (90 aa).

Cys86 carries S-palmitoyl cysteine lipidation. A Cysteine methyl ester modification is found at Cys87. Cys87 carries S-farnesyl cysteine lipidation. Positions 88 to 90 are cleaved as a propeptide — removed in mature form; that stretch reads CIM.

This sequence belongs to the G protein gamma family. As to quaternary structure, g proteins are composed of 3 units, alpha, beta and gamma.

It localises to the membrane. This chain is Guanine nucleotide-binding protein subunit gamma, found in Eremothecium gossypii (strain ATCC 10895 / CBS 109.51 / FGSC 9923 / NRRL Y-1056) (Yeast).